Here is a 201-residue protein sequence, read N- to C-terminus: Large ribosomal subunit protein uL4 (201 aa).

The interval 43-73 (TRAQKTRSEVSGGGAKPWRQKGTGRARAGTT) is disordered.

The protein belongs to the universal ribosomal protein uL4 family. In terms of assembly, part of the 50S ribosomal subunit.

Its function is as follows. One of the primary rRNA binding proteins, this protein initially binds near the 5'-end of the 23S rRNA. It is important during the early stages of 50S assembly. It makes multiple contacts with different domains of the 23S rRNA in the assembled 50S subunit and ribosome. Forms part of the polypeptide exit tunnel. This chain is Large ribosomal subunit protein uL4, found in Colwellia psychrerythraea (strain 34H / ATCC BAA-681) (Vibrio psychroerythus).